A 148-amino-acid polypeptide reads, in one-letter code: Glutamate mutase sigma subunit 2 (148 aa).

In terms of domain architecture, B12-binding spans 1–134 (MRTVILGVIG…EALKADLGHR (134 aa)). Adenosylcob(III)alamin contacts are provided by residues 11–15 (SDAHV), His14, 59–61 (SSL), and 90–94 (NLAVG). Residues 129 to 141 (ADLGHRSREEASS) show a composition bias toward basic and acidic residues. Residues 129–148 (ADLGHRSREEASSEKVQLGS) are disordered.

This sequence belongs to the methylaspartate mutase GlmS subunit family. In terms of assembly, heterotetramer composed of 2 epsilon subunits (GlmE) and 2 sigma subunits (GlmS). GlmE exists as a homodimer and GlmS as a monomer. Adenosylcob(III)alamin is required as a cofactor.

The catalysed reaction is (2S,3S)-3-methyl-L-aspartate = L-glutamate. Its pathway is amino-acid degradation; L-glutamate degradation via mesaconate pathway; acetate and pyruvate from L-glutamate: step 1/4. Its function is as follows. Catalyzes the carbon skeleton rearrangement of L-glutamate to L-threo-3-methylaspartate ((2S,3S)-3-methylaspartate). This Haloarcula marismortui (strain ATCC 43049 / DSM 3752 / JCM 8966 / VKM B-1809) (Halobacterium marismortui) protein is Glutamate mutase sigma subunit 2.